A 1339-amino-acid chain; its full sequence is Receptor tyrosine-protein kinase erbB-3 (1339 aa).

The signal sequence occupies residues 1-19 (MSAIGTLQVLGFLLSLARG). Topologically, residues 20–641 (SEMGNSQAVC…QAEVLMSKPH (622 aa)) are extracellular. A glycan (N-linked (GlcNAc...) asparagine) is linked at asparagine 126. Intrachain disulfides connect cysteine 186–cysteine 194, cysteine 190–cysteine 202, cysteine 210–cysteine 218, cysteine 214–cysteine 226, cysteine 227–cysteine 235, cysteine 231–cysteine 243, cysteine 246–cysteine 255, cysteine 259–cysteine 286, cysteine 290–cysteine 301, cysteine 305–cysteine 320, and cysteine 323–cysteine 327. N-linked (GlcNAc...) asparagine glycosylation occurs at asparagine 250. N-linked (GlcNAc...) asparagine glycosylation is found at asparagine 353, asparagine 408, asparagine 414, asparagine 437, and asparagine 469. Disulfide bonds link cysteine 500/cysteine 509, cysteine 504/cysteine 517, cysteine 520/cysteine 529, cysteine 533/cysteine 549, cysteine 552/cysteine 565, cysteine 556/cysteine 573, cysteine 576/cysteine 585, cysteine 589/cysteine 610, cysteine 613/cysteine 621, and cysteine 617/cysteine 629. A glycan (N-linked (GlcNAc...) asparagine) is linked at asparagine 522. Asparagine 566 is a glycosylation site (N-linked (GlcNAc...) asparagine). The N-linked (GlcNAc...) asparagine glycan is linked to asparagine 616. Residues 642–662 (LVIAVTVGLTVIFLILGGSFL) form a helical membrane-spanning segment. At 663–1339 (YWRGRRIQNK…LFPKANAQRI (677 aa)) the chain is on the cytoplasmic side. Position 684 is a phosphoserine (serine 684). The Protein kinase domain occupies 707-964 (LRKLKVLGSG…TFKELANEFT (258 aa)). ATP is bound by residues 713-721 (LGSGVFGTV), lysine 740, 786-788 (QYL), and 832-837 (DLALRN). Aspartate 832 serves as the catalytic Proton acceptor. Serine 980 is subject to Phosphoserine. Disordered regions lie at residues 1028 to 1052 (LSLP…SGYM), 1077 to 1156 (RPIS…GNGY), and 1181 to 1212 (SVLG…PRPG). The segment covering 1185–1195 (TEEEDEDEEYE) has biased composition (acidic residues).

It belongs to the protein kinase superfamily. Tyr protein kinase family. EGF receptor subfamily. As to quaternary structure, monomer and homodimer. Heterodimer with each of the other ERBB receptors (Potential). Interacts with CSPG5, PA2G4, GRB7 and MUC1. Interacts with MYOC. Found in a ternary complex with NRG1 and ITGAV:ITGB3 or ITGA6:ITGB4. Post-translationally, autophosphorylated. Ligand-binding increases phosphorylation on tyrosine residues and promotes its association with the p85 subunit of phosphatidylinositol 3-kinase. In terms of tissue distribution, in the muscle, expression localizes to the synaptic sites of muscle fibers.

It localises to the membrane. It carries out the reaction L-tyrosyl-[protein] + ATP = O-phospho-L-tyrosyl-[protein] + ADP + H(+). In terms of biological role, tyrosine-protein kinase that plays an essential role as cell surface receptor for neuregulins. Binds to neuregulin-1 (NRG1) and is activated by it; ligand-binding increases phosphorylation on tyrosine residues and promotes its association with the p85 subunit of phosphatidylinositol 3-kinase. May also be activated by CSPG5. Involved in the regulation of myeloid cell differentiation. This chain is Receptor tyrosine-protein kinase erbB-3 (Erbb3), found in Mus musculus (Mouse).